The chain runs to 202 residues: ADP-ribosylation factor-like protein 15 (202 aa).

Residues 39–46 (GLTGSGKT), 82–86 (ELGGA), and 142–145 (NHQD) each bind GTP.

This sequence belongs to the small GTPase superfamily. Arf family.

The sequence is that of ADP-ribosylation factor-like protein 15 (ARL15) from Bos taurus (Bovine).